The sequence spans 601 residues: Elongation factor 4 (601 aa).

The region spanning 7–189 (SNVRNFSIVA…AIVTRLPPPK (183 aa)) is the tr-type G domain. GTP contacts are provided by residues 19-24 (DHGKST) and 136-139 (NKVD).

Belongs to the TRAFAC class translation factor GTPase superfamily. Classic translation factor GTPase family. LepA subfamily.

Its subcellular location is the cell inner membrane. The enzyme catalyses GTP + H2O = GDP + phosphate + H(+). Functionally, required for accurate and efficient protein synthesis under certain stress conditions. May act as a fidelity factor of the translation reaction, by catalyzing a one-codon backward translocation of tRNAs on improperly translocated ribosomes. Back-translocation proceeds from a post-translocation (POST) complex to a pre-translocation (PRE) complex, thus giving elongation factor G a second chance to translocate the tRNAs correctly. Binds to ribosomes in a GTP-dependent manner. The chain is Elongation factor 4 from Afipia carboxidovorans (strain ATCC 49405 / DSM 1227 / KCTC 32145 / OM5) (Oligotropha carboxidovorans).